The following is a 363-amino-acid chain: tRNA N6-adenosine threonylcarbamoyltransferase (363 aa).

Residues histidine 121 and histidine 125 each coordinate Fe cation. Residues 143–147, aspartate 176, glycine 189, and asparagine 287 each bind substrate; that span reads LASGG. Aspartate 315 contributes to the Fe cation binding site.

It belongs to the KAE1 / TsaD family. Fe(2+) serves as cofactor.

The protein resides in the cytoplasm. It carries out the reaction L-threonylcarbamoyladenylate + adenosine(37) in tRNA = N(6)-L-threonylcarbamoyladenosine(37) in tRNA + AMP + H(+). In terms of biological role, required for the formation of a threonylcarbamoyl group on adenosine at position 37 (t(6)A37) in tRNAs that read codons beginning with adenine. Is involved in the transfer of the threonylcarbamoyl moiety of threonylcarbamoyl-AMP (TC-AMP) to the N6 group of A37, together with TsaE and TsaB. TsaD likely plays a direct catalytic role in this reaction. The protein is tRNA N6-adenosine threonylcarbamoyltransferase of Rhodopseudomonas palustris (strain HaA2).